The primary structure comprises 448 residues: Probable glycine dehydrogenase (decarboxylating) subunit 1 (448 aa).

It belongs to the GcvP family. N-terminal subunit subfamily. As to quaternary structure, the glycine cleavage system is composed of four proteins: P, T, L and H. In this organism, the P 'protein' is a heterodimer of two subunits.

It catalyses the reaction N(6)-[(R)-lipoyl]-L-lysyl-[glycine-cleavage complex H protein] + glycine + H(+) = N(6)-[(R)-S(8)-aminomethyldihydrolipoyl]-L-lysyl-[glycine-cleavage complex H protein] + CO2. In terms of biological role, the glycine cleavage system catalyzes the degradation of glycine. The P protein binds the alpha-amino group of glycine through its pyridoxal phosphate cofactor; CO(2) is released and the remaining methylamine moiety is then transferred to the lipoamide cofactor of the H protein. The sequence is that of Probable glycine dehydrogenase (decarboxylating) subunit 1 from Thermomicrobium roseum (strain ATCC 27502 / DSM 5159 / P-2).